We begin with the raw amino-acid sequence, 137 residues long: Large ribosomal subunit protein uL16 (137 aa).

The protein belongs to the universal ribosomal protein uL16 family. Part of the 50S ribosomal subunit.

Functionally, binds 23S rRNA and is also seen to make contacts with the A and possibly P site tRNAs. The sequence is that of Large ribosomal subunit protein uL16 from Rhodopseudomonas palustris (strain ATCC BAA-98 / CGA009).